The following is a 261-amino-acid chain: MTHQTHAYHMVNPSPWPLTGALSALLMTSGLVMWFHYNSTLLLTLGLTTNLLTMYQWWRDIIRESTFQGHHTPAVQKGLRYGMILFIISEVFFFSGFFWAFYHSSLAPTPELGGCWPPTGIHPLNPMEVPLLNTSVLLASGVSITWAHHSLMEGNRKHMLQALFITISLGIYFTLLQASEYYEAPFTISDGVYGSTFFVATGFHGLHVIIGSTFLIVCFLRQLKFHFTSNHHFGFEAAAWYWHFVDVVWLFLYVSIYWWGS.

At 1–15 the chain is on the mitochondrial matrix side; that stretch reads MTHQTHAYHMVNPSP. Residues 16–34 traverse the membrane as a helical segment; the sequence is WPLTGALSALLMTSGLVMW. Over 35–40 the chain is Mitochondrial intermembrane; it reads FHYNST. A helical membrane pass occupies residues 41–66; the sequence is LLLTLGLTTNLLTMYQWWRDIIREST. The Mitochondrial matrix segment spans residues 67 to 72; it reads FQGHHT. The helical transmembrane segment at 73 to 105 threads the bilayer; that stretch reads PAVQKGLRYGMILFIISEVFFFSGFFWAFYHSS. Over 106-128 the chain is Mitochondrial intermembrane; it reads LAPTPELGGCWPPTGIHPLNPME. A helical membrane pass occupies residues 129 to 152; it reads VPLLNTSVLLASGVSITWAHHSLM. Over 153–155 the chain is Mitochondrial matrix; sequence EGN. Residues 156–183 form a helical membrane-spanning segment; the sequence is RKHMLQALFITISLGIYFTLLQASEYYE. Residues 184–190 lie on the Mitochondrial intermembrane side of the membrane; it reads APFTISD. Residues 191–223 form a helical membrane-spanning segment; the sequence is GVYGSTFFVATGFHGLHVIIGSTFLIVCFLRQL. Residues 224–232 lie on the Mitochondrial matrix side of the membrane; it reads KFHFTSNHH. A helical transmembrane segment spans residues 233 to 256; it reads FGFEAAAWYWHFVDVVWLFLYVSI. Topologically, residues 257–261 are mitochondrial intermembrane; it reads YWWGS.

This sequence belongs to the cytochrome c oxidase subunit 3 family. As to quaternary structure, component of the cytochrome c oxidase (complex IV, CIV), a multisubunit enzyme composed of 14 subunits. The complex is composed of a catalytic core of 3 subunits MT-CO1, MT-CO2 and MT-CO3, encoded in the mitochondrial DNA, and 11 supernumerary subunits COX4I, COX5A, COX5B, COX6A, COX6B, COX6C, COX7A, COX7B, COX7C, COX8 and NDUFA4, which are encoded in the nuclear genome. The complex exists as a monomer or a dimer and forms supercomplexes (SCs) in the inner mitochondrial membrane with NADH-ubiquinone oxidoreductase (complex I, CI) and ubiquinol-cytochrome c oxidoreductase (cytochrome b-c1 complex, complex III, CIII), resulting in different assemblies (supercomplex SCI(1)III(2)IV(1) and megacomplex MCI(2)III(2)IV(2)).

Its subcellular location is the mitochondrion inner membrane. The catalysed reaction is 4 Fe(II)-[cytochrome c] + O2 + 8 H(+)(in) = 4 Fe(III)-[cytochrome c] + 2 H2O + 4 H(+)(out). Its function is as follows. Component of the cytochrome c oxidase, the last enzyme in the mitochondrial electron transport chain which drives oxidative phosphorylation. The respiratory chain contains 3 multisubunit complexes succinate dehydrogenase (complex II, CII), ubiquinol-cytochrome c oxidoreductase (cytochrome b-c1 complex, complex III, CIII) and cytochrome c oxidase (complex IV, CIV), that cooperate to transfer electrons derived from NADH and succinate to molecular oxygen, creating an electrochemical gradient over the inner membrane that drives transmembrane transport and the ATP synthase. Cytochrome c oxidase is the component of the respiratory chain that catalyzes the reduction of oxygen to water. Electrons originating from reduced cytochrome c in the intermembrane space (IMS) are transferred via the dinuclear copper A center (CU(A)) of subunit 2 and heme A of subunit 1 to the active site in subunit 1, a binuclear center (BNC) formed by heme A3 and copper B (CU(B)). The BNC reduces molecular oxygen to 2 water molecules using 4 electrons from cytochrome c in the IMS and 4 protons from the mitochondrial matrix. This chain is Cytochrome c oxidase subunit 3 (MT-CO3), found in Rhinoceros unicornis (Greater Indian rhinoceros).